The sequence spans 242 residues: Probable transcriptional regulatory protein Csac_0964 (242 aa).

A disordered region spans residues 1–20 (MSGHSKWANIRHKKEKTDAQ).

Belongs to the TACO1 family.

It localises to the cytoplasm. The chain is Probable transcriptional regulatory protein Csac_0964 from Caldicellulosiruptor saccharolyticus (strain ATCC 43494 / DSM 8903 / Tp8T 6331).